A 206-amino-acid polypeptide reads, in one-letter code: LexA repressor (206 aa).

The segment at residues 28-48 is a DNA-binding region (H-T-H motif); sequence VREIGEAVGLASSSTVHGHLA. Residues Ser-128 and Lys-166 each act as for autocatalytic cleavage activity in the active site.

The protein belongs to the peptidase S24 family. As to quaternary structure, homodimer.

It carries out the reaction Hydrolysis of Ala-|-Gly bond in repressor LexA.. Represses a number of genes involved in the response to DNA damage (SOS response), including recA and lexA. In the presence of single-stranded DNA, RecA interacts with LexA causing an autocatalytic cleavage which disrupts the DNA-binding part of LexA, leading to derepression of the SOS regulon and eventually DNA repair. In Bacillus pumilus (strain SAFR-032), this protein is LexA repressor.